The sequence spans 206 residues: CASP-like protein 2C1 (206 aa).

Residues 1–31 are Cytoplasmic-facing; that stretch reads MSVLGVGPRTVTPHLRKGMMESSSGISLARA. Residues 32 to 52 traverse the membrane as a helical segment; sequence EAFLRLFAILVLVLTACLLGF. Topologically, residues 53–71 are extracellular; sequence DTQTKLLFSTIKKTATFRD. Residues 72-92 traverse the membrane as a helical segment; sequence LGALQVVVYVDSVAAGYNLLQ. At 93–111 the chain is on the cytoplasmic side; it reads LGRGFISAKLKGKLINVSY. A helical membrane pass occupies residues 112–132; it reads VTLPWVCFLLDQAAVYTVFSA. Topologically, residues 133–161 are extracellular; it reads NTAALQASIIAVTGESSLQWMKVCNRYTR. Residues 162-182 traverse the membrane as a helical segment; it reads FCIQVGGALLSGYLASLLMVL. At 183-206 the chain is on the cytoplasmic side; the sequence is LSSLSAFSLFRLYSPKQFHLLKPT.

The protein belongs to the Casparian strip membrane proteins (CASP) family. In terms of assembly, homodimer and heterodimers.

It is found in the cell membrane. The chain is CASP-like protein 2C1 from Vitis vinifera (Grape).